A 145-amino-acid polypeptide reads, in one-letter code: Secreted RxLR effector protein 100 (145 aa).

The N-terminal stretch at 1 to 19 (MRYLLLTFFTFHCQMVADA) is a signal peptide. Positions 27 to 30 (RLLR) match the RxLR motif. The tract at residues 38-77 (SGEGKIEEAGMIVTTGAPTPENETMEHNEVPQSTTDTDQK) is disordered. An N-linked (GlcNAc...) asparagine glycan is attached at Asn59.

It belongs to the RxLR effector family.

The protein resides in the secreted. Its subcellular location is the host nucleus. Its function is as follows. Secreted effector that dos not suppress the host cell death induced by cell death-inducing proteins. The polypeptide is Secreted RxLR effector protein 100 (Plasmopara viticola (Downy mildew of grapevine)).